The primary structure comprises 277 residues: Putative phosphoenolpyruvate synthase regulatory protein (277 aa).

An ADP-binding site is contributed by 157–164 (GVSRCGKT).

The protein belongs to the pyruvate, phosphate/water dikinase regulatory protein family. PSRP subfamily.

It carries out the reaction [pyruvate, water dikinase] + ADP = [pyruvate, water dikinase]-phosphate + AMP + H(+). It catalyses the reaction [pyruvate, water dikinase]-phosphate + phosphate + H(+) = [pyruvate, water dikinase] + diphosphate. In terms of biological role, bifunctional serine/threonine kinase and phosphorylase involved in the regulation of the phosphoenolpyruvate synthase (PEPS) by catalyzing its phosphorylation/dephosphorylation. In Klebsiella pneumoniae (strain 342), this protein is Putative phosphoenolpyruvate synthase regulatory protein.